A 598-amino-acid chain; its full sequence is Elongation factor 4 (598 aa).

Positions 5–187 (ANIRNFSIIA…ALVEFIPAPT (183 aa)) constitute a tr-type G domain. Residues 17 to 22 (DHGKST) and 134 to 137 (NKID) contribute to the GTP site.

This sequence belongs to the TRAFAC class translation factor GTPase superfamily. Classic translation factor GTPase family. LepA subfamily.

Its subcellular location is the cell inner membrane. The enzyme catalyses GTP + H2O = GDP + phosphate + H(+). In terms of biological role, required for accurate and efficient protein synthesis under certain stress conditions. May act as a fidelity factor of the translation reaction, by catalyzing a one-codon backward translocation of tRNAs on improperly translocated ribosomes. Back-translocation proceeds from a post-translocation (POST) complex to a pre-translocation (PRE) complex, thus giving elongation factor G a second chance to translocate the tRNAs correctly. Binds to ribosomes in a GTP-dependent manner. This is Elongation factor 4 from Psychrobacter arcticus (strain DSM 17307 / VKM B-2377 / 273-4).